The primary structure comprises 504 residues: Cobyric acid synthase (504 aa).

One can recognise a GATase cobBQ-type domain in the interval glutamate 258 to tryptophan 454. Cysteine 339 serves as the catalytic Nucleophile. Residue histidine 446 is part of the active site.

This sequence belongs to the CobB/CobQ family. CobQ subfamily.

It participates in cofactor biosynthesis; adenosylcobalamin biosynthesis. Catalyzes amidations at positions B, D, E, and G on adenosylcobyrinic A,C-diamide. NH(2) groups are provided by glutamine, and one molecule of ATP is hydrogenolyzed for each amidation. This Prochlorococcus marinus (strain NATL2A) protein is Cobyric acid synthase.